The primary structure comprises 736 residues: Phosphoribosylformylglycinamidine synthase subunit PurL (736 aa).

The active site involves His-49. ATP contacts are provided by Tyr-52 and Lys-91. Glu-93 is a Mg(2+) binding site. Substrate-binding positions include 94–97 (SHNH) and Arg-116. The Proton acceptor role is filled by His-95. Mg(2+) is bound at residue Asp-117. Gln-240 is a substrate binding site. Position 268 (Asp-268) interacts with Mg(2+). 312–314 (ESQ) is a substrate binding site. Residues Asp-493 and Gly-530 each contribute to the ATP site. Asn-531 lines the Mg(2+) pocket. Residue Ser-533 coordinates substrate.

Belongs to the FGAMS family. As to quaternary structure, monomer. Part of the FGAM synthase complex composed of 1 PurL, 1 PurQ and 2 PurS subunits.

The protein localises to the cytoplasm. The catalysed reaction is N(2)-formyl-N(1)-(5-phospho-beta-D-ribosyl)glycinamide + L-glutamine + ATP + H2O = 2-formamido-N(1)-(5-O-phospho-beta-D-ribosyl)acetamidine + L-glutamate + ADP + phosphate + H(+). The protein operates within purine metabolism; IMP biosynthesis via de novo pathway; 5-amino-1-(5-phospho-D-ribosyl)imidazole from N(2)-formyl-N(1)-(5-phospho-D-ribosyl)glycinamide: step 1/2. Functionally, part of the phosphoribosylformylglycinamidine synthase complex involved in the purines biosynthetic pathway. Catalyzes the ATP-dependent conversion of formylglycinamide ribonucleotide (FGAR) and glutamine to yield formylglycinamidine ribonucleotide (FGAM) and glutamate. The FGAM synthase complex is composed of three subunits. PurQ produces an ammonia molecule by converting glutamine to glutamate. PurL transfers the ammonia molecule to FGAR to form FGAM in an ATP-dependent manner. PurS interacts with PurQ and PurL and is thought to assist in the transfer of the ammonia molecule from PurQ to PurL. The sequence is that of Phosphoribosylformylglycinamidine synthase subunit PurL from Rhodopseudomonas palustris (strain ATCC BAA-98 / CGA009).